A 1218-amino-acid chain; its full sequence is Sodium bicarbonate cotransporter 3 (1218 aa).

Disordered stretches follow at residues 1 to 31 and 53 to 99; these read MEAD…KTSS and HVPF…SQRV. The Extracellular portion of the chain corresponds to 1–612; it reads MEADGAGEQM…DFKDALSLQC (612 aa). A phosphoserine mark is found at Ser57, Ser60, Ser89, and Ser155. Residues 60 to 77 are compositionally biased toward basic residues; the sequence is SRRRHRHRGHKHHHRRRK. Residues 78 to 90 are compositionally biased toward basic and acidic residues; that stretch reads DKDSDKEDGRESP. An N-linked (GlcNAc...) asparagine glycan is attached at Asn176. Residues Ser238, Ser247, and Arg263 each carry the phosphoserine modification. Asn274 is a glycosylation site (N-linked (GlcNAc...) asparagine). Disordered stretches follow at residues 294–350, 364–412, and 536–577; these read SRAG…DIPR, KGQE…ENST, and SIRI…HAGP. A compositionally biased stretch (pro residues) spans 308-318; that stretch reads VPTPQNSPPSS. Residues 319-337 are compositionally biased toward low complexity; sequence PSLSRLTSRSSQQTQPQAP. Residues 383 to 396 show a composition bias toward polar residues; that stretch reads SPQSAPGNLDSSKS. Phosphoserine occurs at positions 386, 404, and 407. Asn410 carries N-linked (GlcNAc...) asparagine glycosylation. A phosphoserine mark is found at Ser411 and Ser560. A compositionally biased stretch (basic and acidic residues) spans 567–576; it reads PPKEADHHAG. Residues 613–633 traverse the membrane as a helical segment; that stretch reads LASILFLYCACMSPVITFGGL. At 634–641 the chain is on the cytoplasmic side; that stretch reads LGEATEGR. A helical transmembrane segment spans residues 642-662; that stretch reads ISAIESLFGASLTGIAYSLFA. The Extracellular segment spans residues 663-699; the sequence is GQPLTILGSTGPVLVFEKILFKFCRDYHLSYLSLRTS. The helical transmembrane segment at 700–720 threads the bilayer; it reads IGLWTSFLCIVLVATDASSLV. Topologically, residues 721–729 are cytoplasmic; sequence CYITRFTEE. The helical transmembrane segment at 730–750 threads the bilayer; the sequence is AFAALICIIFIYEALEKLFHL. Topologically, residues 751–821 are extracellular; the sequence is GEIYAFNMHN…MFVGSACGPH (71 aa). A disulfide bond links Cys770 and Cys772. 3 N-linked (GlcNAc...) asparagine glycosylation sites follow: Asn780, Asn790, and Asn800. A disulfide bridge links Cys806 with Cys818. The chain crosses the membrane as a helical span at residues 822 to 842; the sequence is GPYVPDVLFWCVVLFFTTFFL. Over 843 to 865 the chain is Cytoplasmic; sequence SSFLKQFKTKRYFPTKVRSTISD. The chain crosses the membrane as a helical span at residues 866 to 886; the sequence is FAVFLTIVIMVAIDYLVGIPS. Residues 887-912 are Extracellular-facing; sequence PKLHVPEKFEPTDPSRGWIISPLGDN. The chain crosses the membrane as a helical span at residues 913–933; sequence PWWTLLIAAVPALLCTILIFM. The Cytoplasmic portion of the chain corresponds to 934-958; sequence DQQITAVIINRKEHKLKKGAGYHLD. The chain crosses the membrane as a helical span at residues 959–979; it reads LLMVAVMLGVCSIMGLPWFVA. At 980–1015 the chain is on the extracellular side; the sequence is ATVLSISHVNSLKVESECSAPGEQPKFLGIREQRVT. An essential for cell membrane localization and transport activity region spans residues 1012–1135; the sequence is QRVTGLMIFI…MDLCFTKREL (124 aa). The helical transmembrane segment at 1016-1036 threads the bilayer; sequence GLMIFILMGLSVFMTSVLKFI. Over 1037-1038 the chain is Cytoplasmic; the sequence is PM. A helical membrane pass occupies residues 1039-1059; the sequence is PVLYGVFLYMGVSSLKGIQFF. The Extracellular portion of the chain corresponds to 1060–1096; the sequence is DRIKLFGMPAKHQPDLIYLRYVPLWKVHVFTVVQLTC. Residues Met1067 and Leu1078 each carry the phosphoserine modification. A helical transmembrane segment spans residues 1097–1117; the sequence is LVLLWVIKASAAAVVFPMMVL. The segment at 1118–1140 is essential for interaction with RACK1; that stretch reads ALVFVRKLMDLCFTKRELSWLDD. Topologically, residues 1118–1218 are cytoplasmic; it reads ALVFVRKLMD…KKYMDAETSL (101 aa). The CA2-binding stretch occupies residues 1138-1140; sequence LDD. A compositionally biased stretch (basic and acidic residues) spans 1148–1165; it reads KKEDDKKKKEKEEAERML. The segment at 1148-1172 is disordered; it reads KKEDDKKKKEKEEAERMLQGDGDTV. Phosphothreonine is present on Thr1171. Residues Ser1180, Thr1188, Ile1201, and Ser1217 each carry the phosphoserine modification. The PDZ-binding signature appears at 1215–1218; it reads ETSL.

Belongs to the anion exchanger (TC 2.A.31) family. In terms of assembly, interacts with USH1C. Forms a complex with ATP6V1B1 and NHERF1/EBP50. Interacts in a pH dependent-manner with CA2/carbonic anhydrase 2. Interacts with CFTR probably through NHERF1/EBP50. Interacts with RACK1. Undergoes lysosome-mediated degradation. In terms of processing, N-glycosylated. In terms of tissue distribution, expressed in aorta, ventricles, atrium, mesenteric artery, kidney, spleen, duodenum, jejunum, ileum, colon, lung, trachea, gastric fundus and pylorus, cerebrum, cerebellum, pancreas, liver, parotid gland, and epididymis. Expressed in the inner ear by cochlear outer and inner hair cells (at protein level). Highly expressed in testis and spleen. As to expression, specifically expressed in kidney. Specifically expressed in hippocampal neurons.

It localises to the basolateral cell membrane. The protein localises to the apical cell membrane. It is found in the cell projection. The protein resides in the stereocilium. Its subcellular location is the cell membrane. It catalyses the reaction hydrogencarbonate(in) + Na(+)(in) = hydrogencarbonate(out) + Na(+)(out). Its activity is regulated as follows. Insensitive to stilbene derivatives. Its function is as follows. Electroneutral sodium- and bicarbonate-dependent cotransporter with a Na(+):HCO3(-) 1:1 stoichiometry. Mediates the sodium-dependent bicarbonate transport important for pH recovery after acid load as well as for regulation of steady-state pH in the duodenum and vascular smooth muscle cells. Plays a key role in macrophage acidification, mediating bicarbonate import into the cytoplasm which is crucial for net acid extrusion and maintenance of cytoplasmic pH during phagocytosis. Provides cellular bicarbonate for de novo purine and pyrimidine synthesis and is a key mediator of de novo nucleotide synthesis downstream of mTORC1 signaling in proliferating cells. The polypeptide is Sodium bicarbonate cotransporter 3 (Slc4a7) (Rattus norvegicus (Rat)).